Reading from the N-terminus, the 70-residue chain is Cytoinsectotoxin-2c (70 aa).

This sequence belongs to the cationic peptide 06 (cytoinsectotoxin) family. Expressed by the venom gland.

The protein resides in the secreted. Insecticidal and antimicrobial peptide. Has insecticidal activity against larvae of flesh fly S.carnaria. Has antibacterial activity against Gram-positive bacterium B.subtilis B-501 (MIC=1.25 uM) and Gram-negative bacterium E.coli DH5alpha (MIC=2.5 uM). The chain is Cytoinsectotoxin-2c from Lachesana tarabaevi (Spider).